The following is a 451-amino-acid chain: Chromosomal replication initiator protein DnaA (451 aa).

Residues 1 to 72 (MQSIEDIWQE…ANILQEITGR (72 aa)) are domain I, interacts with DnaA modulators. A domain II region spans residues 72-108 (RLFDVRFIDGEQEENFEYTVIKPNPALDEDGVEIGKH). The interval 109 to 325 (MLNPRYVFDT…GALIRVVAYS (217 aa)) is domain III, AAA+ region. The ATP site is built by glycine 153, glycine 155, lysine 156, and threonine 157. Residues 326-451 (SLVNKDITAG…KNLRKAQNMF (126 aa)) are domain IV, binds dsDNA.

It belongs to the DnaA family. Oligomerizes as a right-handed, spiral filament on DNA at oriC.

Its subcellular location is the cytoplasm. Its function is as follows. Plays an essential role in the initiation and regulation of chromosomal replication. ATP-DnaA binds to the origin of replication (oriC) to initiate formation of the DNA replication initiation complex once per cell cycle. Binds the DnaA box (a 9 base pair repeat at the origin) and separates the double-stranded (ds)DNA. Forms a right-handed helical filament on oriC DNA; dsDNA binds to the exterior of the filament while single-stranded (ss)DNA is stabiized in the filament's interior. The ATP-DnaA-oriC complex binds and stabilizes one strand of the AT-rich DNA unwinding element (DUE), permitting loading of DNA polymerase. After initiation quickly degrades to an ADP-DnaA complex that is not apt for DNA replication. Binds acidic phospholipids. The protein is Chromosomal replication initiator protein DnaA of Listeria monocytogenes serotype 4b (strain CLIP80459).